The sequence spans 411 residues: Glutamate dehydrogenase A (411 aa).

K102 is a catalytic residue.

This sequence belongs to the Glu/Leu/Phe/Val dehydrogenases family.

The enzyme catalyses L-glutamate + NAD(+) + H2O = 2-oxoglutarate + NH4(+) + NADH + H(+). It catalyses the reaction L-glutamate + NADP(+) + H2O = 2-oxoglutarate + NH4(+) + NADPH + H(+). The chain is Glutamate dehydrogenase A (GDHA) from Nicotiana plumbaginifolia (Leadwort-leaved tobacco).